The primary structure comprises 171 residues: O-acetyl-ADP-ribose deacetylase 1 (171 aa).

The 171-residue stretch at 1 to 171 (MKKITVIQGD…NYDLYLKLLN (171 aa)) folds into the Macro domain. Substrate-binding positions include 10–11 (DI), N24, 32–34 (GVD), and 121–125 (STGIY). Residue D34 is the Proton acceptor of the active site.

This sequence belongs to the MacroD-type family. YmdB subfamily. As to quaternary structure, homodimer. Interacts with RNase III.

The catalysed reaction is 3''-O-acetyl-ADP-D-ribose + H2O = ADP-D-ribose + acetate + H(+). The enzyme catalyses 2''-O-acetyl-ADP-D-ribose + H2O = ADP-D-ribose + acetate + H(+). In terms of biological role, deacetylates O-acetyl-ADP ribose to yield ADP-ribose and free acetate. Down-regulates ribonuclease 3 (RNase III) activity. Acts by interacting directly with the region of the ribonuclease that is required for dimerization/activation. The polypeptide is O-acetyl-ADP-ribose deacetylase 1 (Pantoea vagans (strain C9-1) (Pantoea agglomerans (strain C9-1))).